The following is a 550-amino-acid chain: Beta-cubebene synthase (550 aa).

Residues Asp303, Asp307, Asp447, and Glu455 each coordinate Mg(2+). The DDXXD motif motif lies at 303–307; that stretch reads DDTYD.

This sequence belongs to the terpene synthase family. Tpsa subfamily. The cofactor is Mg(2+). In terms of tissue distribution, expressed in young developing leaves and in stamens. Not detected in tepals and carpels.

It catalyses the reaction (2E,6E)-farnesyl diphosphate = beta-cubebene + diphosphate. Its pathway is secondary metabolite biosynthesis; terpenoid biosynthesis. Functionally, sesquiterpene synthase converting farnesyl diphosphate into beta-cubebene (24.5%), alpha-muurolene (19.3%), delta-cadinol (18.6%), delta-elemene (16.0%), tau-muurolene (10.8%), and beta-elemene (10.8%). No activity with geranyl diphosphate or geranylgeranyl diphosphate. This Magnolia grandiflora (Southern magnolia) protein is Beta-cubebene synthase.